The following is a 90-amino-acid chain: Bombyxin G-1 (90 aa).

A signal peptide spans Met1–Gly19. 3 cysteine pairs are disulfide-bonded: Cys28–Cys77, Cys40–Cys90, and Cys76–Cys81. A propeptide spans Asn49–Ile67 (c peptide like).

The protein belongs to the insulin family. As to quaternary structure, heterodimer of a B chain and an A chain linked by two disulfide bonds.

Its subcellular location is the secreted. The chain is Bombyxin G-1 (BBXG1) from Bombyx mori (Silk moth).